The following is a 364-amino-acid chain: Aminomethyltransferase (364 aa).

Belongs to the GcvT family. The glycine cleavage system is composed of four proteins: P, T, L and H.

It carries out the reaction N(6)-[(R)-S(8)-aminomethyldihydrolipoyl]-L-lysyl-[protein] + (6S)-5,6,7,8-tetrahydrofolate = N(6)-[(R)-dihydrolipoyl]-L-lysyl-[protein] + (6R)-5,10-methylene-5,6,7,8-tetrahydrofolate + NH4(+). The glycine cleavage system catalyzes the degradation of glycine. This is Aminomethyltransferase from Shigella sonnei (strain Ss046).